We begin with the raw amino-acid sequence, 224 residues long: Ribonuclease 3 (224 aa).

Positions 4–126 (LDRLQRQISY…IIGAISLDSS (123 aa)) constitute an RNase III domain. Residue Glu-39 participates in Mg(2+) binding. The active site involves Asp-43. The Mg(2+) site is built by Asp-112 and Glu-115. Residue Glu-115 is part of the active site. A DRBM domain is found at 153-223 (DPKTRLQEYL…AEQILTALEI (71 aa)).

It belongs to the ribonuclease III family. In terms of assembly, homodimer. Mg(2+) is required as a cofactor.

It localises to the cytoplasm. The catalysed reaction is Endonucleolytic cleavage to 5'-phosphomonoester.. In terms of biological role, digests double-stranded RNA. Involved in the processing of primary rRNA transcript to yield the immediate precursors to the large and small rRNAs (23S and 16S). Processes some mRNAs, and tRNAs when they are encoded in the rRNA operon. Processes pre-crRNA and tracrRNA of type II CRISPR loci if present in the organism. This is Ribonuclease 3 from Mannheimia succiniciproducens (strain KCTC 0769BP / MBEL55E).